Reading from the N-terminus, the 76-residue chain is Large ribosomal subunit protein uL24 (76 aa).

Belongs to the universal ribosomal protein uL24 family. As to quaternary structure, part of the 50S ribosomal subunit.

Functionally, one of two assembly initiator proteins, it binds directly to the 5'-end of the 23S rRNA, where it nucleates assembly of the 50S subunit. One of the proteins that surrounds the polypeptide exit tunnel on the outside of the subunit. In Campylobacter hominis (strain ATCC BAA-381 / DSM 21671 / CCUG 45161 / LMG 19568 / NCTC 13146 / CH001A), this protein is Large ribosomal subunit protein uL24.